The following is a 587-amino-acid chain: Beta-(1--&gt;2)glucan export ATP-binding/permease protein NdvA (587 aa).

In terms of domain architecture, ABC transmembrane type-1 spans 21 to 301; the sequence is VSLVVVANIV…MRQFATQIFE (281 aa). 6 helical membrane-spanning segments follow: residues 23 to 43, 57 to 77, 128 to 148, 158 to 178, 248 to 268, and 272 to 292; these read LVVV…ILFG, PILF…VLVA, GLWL…ALLI, LSAV…VVMS, MAST…VQAG, and VGDV…LDLM. Residues 335–569 enclose the ABC transporter domain; the sequence is IEFRDVSFGF…NGRFAALLRA (235 aa). 368–375 contacts ATP; sequence GPTGAGKT.

The protein belongs to the ABC transporter superfamily. Beta-(1--&gt;2)glucan exporter (TC 3.A.1.108.1) family. As to quaternary structure, homodimer.

Its subcellular location is the cell inner membrane. It catalyses the reaction [(1-&gt;2)-beta-D-glucosyl](n)(in) + ATP + H2O = [(1-&gt;2)-beta-D-glucosyl](n)(out) + ADP + phosphate + H(+). Functionally, involved in beta-(1--&gt;2)glucan export. Transmembrane domains (TMD) form a pore in the inner membrane and the ATP-binding domain (NBD) is responsible for energy generation. The chain is Beta-(1--&gt;2)glucan export ATP-binding/permease protein NdvA from Rhizobium johnstonii (strain DSM 114642 / LMG 32736 / 3841) (Rhizobium leguminosarum bv. viciae).